Here is a 734-residue protein sequence, read N- to C-terminus: DNA-binding protein RFX2 (734 aa).

Polar residues predominate over residues Met1–Gln23. The tract at residues Met1–Pro31 is disordered. Residues His204–Pro279 constitute a DNA-binding region (RFX-type winged-helix). The segment at Asp694–Arg722 is disordered. Basic and acidic residues predominate over residues Asp706–Arg722.

It belongs to the RFX family. In terms of assembly, homodimer. Heterodimer; heterodimerizes with other rfx proteins.

Its subcellular location is the nucleus. It is found in the cytoplasm. Its function is as follows. Transcription factor that acts as a key regulator of ciliogenesis. Specifically regulates expression of genes required for cilium assembly and function. Recognizes and binds the X-box, a regulatory motif with DNA sequence 5'-GTNRCC(0-3N)RGYAAC-3' present on promoters. The protein is DNA-binding protein RFX2 (rfx2) of Danio rerio (Zebrafish).